Reading from the N-terminus, the 157-residue chain is Endoribonuclease YbeY (157 aa).

Positions 122, 126, and 132 each coordinate Zn(2+).

It belongs to the endoribonuclease YbeY family. Zn(2+) serves as cofactor.

The protein localises to the cytoplasm. Its function is as follows. Single strand-specific metallo-endoribonuclease involved in late-stage 70S ribosome quality control and in maturation of the 3' terminus of the 16S rRNA. This chain is Endoribonuclease YbeY, found in Bacillus velezensis (strain DSM 23117 / BGSC 10A6 / LMG 26770 / FZB42) (Bacillus amyloliquefaciens subsp. plantarum).